A 214-amino-acid polypeptide reads, in one-letter code: Late embryogenesis abundant protein At1g64065 (214 aa).

The helical transmembrane segment at 41 to 61 (VYSLTIIVIIFALCLILSSIF) threads the bilayer.

It belongs to the LEA type 2 family.

It localises to the membrane. This Arabidopsis thaliana (Mouse-ear cress) protein is Late embryogenesis abundant protein At1g64065.